Here is an 882-residue protein sequence, read N- to C-terminus: Leucine--tRNA ligase (882 aa).

The short motif at 43–53 is the 'HIGH' region element; that stretch reads PYPSGNLHMGH. Positions 632–636 match the 'KMSKS' region motif; the sequence is TMSKS. Lys635 contributes to the ATP binding site.

The protein belongs to the class-I aminoacyl-tRNA synthetase family.

It localises to the cytoplasm. The enzyme catalyses tRNA(Leu) + L-leucine + ATP = L-leucyl-tRNA(Leu) + AMP + diphosphate. The polypeptide is Leucine--tRNA ligase (Synechococcus sp. (strain JA-2-3B'a(2-13)) (Cyanobacteria bacterium Yellowstone B-Prime)).